The primary structure comprises 174 residues: Co-chaperone protein HscB homolog (174 aa).

Positions 2 to 74 (NYFELFKFSP…IRRAEHMLSL (73 aa)) constitute a J domain.

It belongs to the HscB family. As to quaternary structure, interacts with HscA and stimulates its ATPase activity.

Its function is as follows. Co-chaperone involved in the maturation of iron-sulfur cluster-containing proteins. Seems to help targeting proteins to be folded toward HscA. This is Co-chaperone protein HscB homolog from Shewanella sp. (strain ANA-3).